We begin with the raw amino-acid sequence, 202 residues long: Imidazoleglycerol-phosphate dehydratase (202 aa).

It belongs to the imidazoleglycerol-phosphate dehydratase family.

It localises to the cytoplasm. It catalyses the reaction D-erythro-1-(imidazol-4-yl)glycerol 3-phosphate = 3-(imidazol-4-yl)-2-oxopropyl phosphate + H2O. Its pathway is amino-acid biosynthesis; L-histidine biosynthesis; L-histidine from 5-phospho-alpha-D-ribose 1-diphosphate: step 6/9. In Acinetobacter baumannii (strain SDF), this protein is Imidazoleglycerol-phosphate dehydratase.